We begin with the raw amino-acid sequence, 574 residues long: Transmembrane glycoprotein NMB (574 aa).

Residues 1-22 (MESLCGVLGFLLLAAGLPLQAA) form the signal peptide. Topologically, residues 23-502 (KRFRDVLGHE…DPDSPLRAVN (480 aa)) are extracellular. 9 N-linked (GlcNAc...) asparagine glycosylation sites follow: asparagine 93, asparagine 134, asparagine 200, asparagine 249, asparagine 275, asparagine 296, asparagine 300, asparagine 306, and asparagine 312. Positions 250–338 (LSDEIFLRDL…STPPPPSTPP (89 aa)) constitute a PKD domain. A disordered region spans residues 320 to 353 (PGPCPPPSPSTPPPPSTPPSPPPSPLPTLSTPSP). Positions 321–345 (GPCPPPSPSTPPPPSTPPSPPPSPL) are enriched in pro residues. Asparagine 463 and asparagine 471 each carry an N-linked (GlcNAc...) asparagine glycan. The chain crosses the membrane as a helical span at residues 503–523 (GVLISIGCLAVLVTMVTILLY). The Cytoplasmic segment spans residues 524–574 (KKHKAYKPIGNCPRNTVKGKGLSVLLSHAKAPFFRGDQEKDPLLQDKPRTL). Phosphoserine is present on serine 546. Residues 558–560 (RGD) carry the Cell attachment site motif.

This sequence belongs to the PMEL/NMB family. As to expression, may be up-regulated in bone metastatic breast cancer cells.

The protein localises to the cell membrane. Its subcellular location is the melanosome membrane. The protein resides in the early endosome membrane. Functionally, could be a melanogenic enzyme. The chain is Transmembrane glycoprotein NMB (Gpnmb) from Mus musculus (Mouse).